We begin with the raw amino-acid sequence, 710 residues long: F-box/WD repeat-containing protein 7 (710 aa).

The tract at residues 1-158 (MNQELLSVGS…CSSVSDLPAH (158 aa)) is disordered. Ser26 carries the post-translational modification Phosphoserine. A compositionally biased stretch (basic and acidic residues) spans 46 to 55 (RHQEEEHTAR). Residues 69–84 (QNDTQQGQVEENNNRF) are compositionally biased toward polar residues. Positions 87-132 (VDEDSSGNQEEQEEDEEHAGEQEEEEEEEEEEEEMDQESDDFDPSD) are enriched in acidic residues. Positions 133–142 (DSSREDEHTH) are enriched in basic and acidic residues. Positions 143 to 158 (NSNVTNCSSVSDLPAH) are enriched in polar residues. Phosphothreonine is present on Thr208. Ser230 carries the phosphoserine; by SGK1 modification. One can recognise an F-box domain in the interval 281–327 (RDFISLLPKELALYVLSFLEPKDLLQAAQTCRYWRILAEDNLLWREK). WD repeat units follow at residues 381–421 (GHDD…RTLV), 423–459 (HTGGVWSSQMRDNIIISGSTDRTLKVWNAETGECIHT), 462–501 (GHTSTVRCMHLHEKRVVSGSRDATLRVWDIETGQCLHVLM), 503–539 (HVAAVRCVQYDGRRVVSGAYDFMVKVWDPETETCLHT), 542–581 (GHTNRVYSLQFDGIHVVSGSLDTSIRVWDVETGNCIHTLT), 583–621 (HQSLTSGMELKDNILVSGNADSTVKIWDIKTGQCLQTLQ), and 625–662 (KHQSAVTCLQFNKNFVITSSDDGTVKLWDLKTGEFIRN).

In terms of assembly, homodimer; homodimerization plays a role in substrate binding and/or ubiquitination and degradation. Component of the SCF(FBXW7) complex consisting of CUL1, RBX1, SKP1 and FBXW7. Interacts (via F-box domain) with SKP1. Interacts (via F-box domain) with pseudophosphatase STYX; the interaction is direct and prevents FBXW7 interaction with SKP1. Interacts with cyclin-E (CCNE1 or CCNE2). Interacts with PSEN1. Forms a trimeric complex with NOTCH1 and SGK1. Interacts with NOTCH1 intracellular domain/NICD and NOTCH4 intracellular domain/NICD. Interacts with NOTCH2 intracellular domain (N2ICD). Interacts with MYC (when phosphorylated). Interacts with USP28, counteracting ubiquitination of MYC. Interacts (when phosphorylated at Thr-208) with PIN1, disrupting FBXW7 dimerization and promoting FBXW7 autoubiquitination and degradation. Interacts with UBE2QL1. Interacts with FAM83D; promotes FBXW7 degradation. Interacts with MYCN; FBXW7 competes with AURKA for binding to unphosphorylated MYCN but not for binding to phosphorylated MYCN. Interacts with JUN. Found in a complex with JUN and PRR7. Interacts with JUN and PRR7; the interaction inhibits ubiquitination-mediated JUN degradation, promoting its phosphorylation and transcriptional activity. Interacts with NFE2L1. Interacts with NR1D1. Interacts with RICTOR; mediates RICTOR ubiquitination and degradation. Interacts with USP38, counteracting ubiquitination of MYC. In terms of processing, phosphorylation at Thr-208 promotes interaction with PIN1, leading to disrupt FBXW7 dimerization and promoting FBXW7 autoubiquitination and degradation. Phosphorylated by ATM at Ser-26 in response to DNA damage, promoting recruitment to DNA damage sites and 'Lys-63'-linked ubiquitination of phosphorylated XRCC4. Ubiquitinated: autoubiquitinates following phosphorylation at Thr-208 and subsequent interaction with PIN1. Ubiquitination leads to its proteasomal degradation. As to expression, widely expressed with highest levels in brain, heart and testis.

The protein localises to the nucleus. The protein resides in the nucleoplasm. Its subcellular location is the chromosome. It participates in protein modification; protein ubiquitination. Its function is as follows. Substrate recognition component of a SCF (SKP1-CUL1-F-box protein) E3 ubiquitin-protein ligase complex which mediates the ubiquitination and subsequent proteasomal degradation of target proteins. Recognizes and binds phosphorylated sites/phosphodegrons within target proteins and thereafter brings them to the SCF complex for ubiquitination. Mediates ubiquitination and subsequent degradation of CCNE1 and MYC. Identified substrates include cyclin-E (CCNE1 or CCNE2), DISC1, JUN, MYC, NOTCH1 released notch intracellular domain (NICD), NOTCH2, MCL1, MLST8, RICTOR and probably PSEN1. Acts as a negative regulator of JNK signaling by binding to phosphorylated JUN and promoting its ubiquitination and subsequent degradation. SCF(FBXW7) complex mediates the ubiquitination and subsequent degradation of NFE2L1. Involved in bone homeostasis and negative regulation of osteoclast differentiation. Regulates the amplitude of the cyclic expression of hepatic core clock genes and genes involved in lipid and glucose metabolism via ubiquitination and proteasomal degradation of their transcriptional repressor NR1D1; CDK1-dependent phosphorylation of NR1D1 is necessary for SCF(FBXW7)-mediated ubiquitination. Also able to promote 'Lys-63'-linked ubiquitination in response to DNA damage. The SCF(FBXW7) complex facilitates double-strand break repair following phosphorylation by ATM: phosphorylation promotes localization to sites of double-strand breaks and 'Lys-63'-linked ubiquitination of phosphorylated XRCC4, enhancing DNA non-homologous end joining. This chain is F-box/WD repeat-containing protein 7, found in Mus musculus (Mouse).